The sequence spans 322 residues: Aldo-keto reductase family 1 member C23 (322 aa).

Gly20–Tyr24 contributes to the NADP(+) binding site. Lys31 is a binding site for substrate. Residue Asp50 participates in NADP(+) binding. The active-site Proton donor is Tyr55. A substrate-binding site is contributed by His117. Residues Ser166–Asn167, Gln190, Tyr216–Ser221, and Lys269–Asn279 each bind NADP(+).

The protein belongs to the aldo/keto reductase family. Monomer. Detected in follicle granulosa cells (at protein level). Detected in heart, lung, liver, kidney, stomach, uterus, testis, skeletal muscle and granulosa cells of the follicle wall.

The protein localises to the cytoplasm. In terms of biological role, NADP-dependent oxidoreductase that has 20-alpha-hydroxysteroid dehydrogenase activity. This Equus caballus (Horse) protein is Aldo-keto reductase family 1 member C23 (AKR1C23).